The chain runs to 298 residues: uncharacterized protein (298 aa).

Residues 1-61 (MDIFISKKMR…TRKDNNISLN (61 aa)) enclose the HTH lysR-type domain. The H-T-H motif DNA-binding region spans 21–40 (IARAAEKIHMTASPFGKSIA).

Belongs to the LysR transcriptional regulatory family.

This is an uncharacterized protein from Escherichia coli (strain K12).